Reading from the N-terminus, the 416-residue chain is 4-hydroxy-3-methylbut-2-en-1-yl diphosphate synthase (flavodoxin) (416 aa).

Residues Cys-304, Cys-307, Cys-350, and Glu-357 each contribute to the [4Fe-4S] cluster site.

It belongs to the IspG family. [4Fe-4S] cluster serves as cofactor.

The enzyme catalyses (2E)-4-hydroxy-3-methylbut-2-enyl diphosphate + oxidized [flavodoxin] + H2O + 2 H(+) = 2-C-methyl-D-erythritol 2,4-cyclic diphosphate + reduced [flavodoxin]. The protein operates within isoprenoid biosynthesis; isopentenyl diphosphate biosynthesis via DXP pathway; isopentenyl diphosphate from 1-deoxy-D-xylulose 5-phosphate: step 5/6. Its function is as follows. Converts 2C-methyl-D-erythritol 2,4-cyclodiphosphate (ME-2,4cPP) into 1-hydroxy-2-methyl-2-(E)-butenyl 4-diphosphate. The sequence is that of 4-hydroxy-3-methylbut-2-en-1-yl diphosphate synthase (flavodoxin) from Rhizobium johnstonii (strain DSM 114642 / LMG 32736 / 3841) (Rhizobium leguminosarum bv. viciae).